Reading from the N-terminus, the 304-residue chain is Probable intron-encoded endonuclease 1 (304 aa).

The GIY-YIG domain maps to 84-175; sequence DKGGIYSFIN…RFNFDNLYNF (92 aa).

It to endonucleases of group I introns of fungi and phage.

It localises to the mitochondrion. Mitochondrial DNA endonuclease involved in intron homing. In Neurospora crassa (strain ATCC 24698 / 74-OR23-1A / CBS 708.71 / DSM 1257 / FGSC 987), this protein is Probable intron-encoded endonuclease 1.